The chain runs to 144 residues: Ribosome-binding factor A (144 aa).

Residues Asp-120 to Ala-144 form a disordered region. A compositionally biased stretch (acidic residues) spans Arg-129–Ala-144.

Belongs to the RbfA family. As to quaternary structure, monomer. Binds 30S ribosomal subunits, but not 50S ribosomal subunits or 70S ribosomes.

It localises to the cytoplasm. Its function is as follows. One of several proteins that assist in the late maturation steps of the functional core of the 30S ribosomal subunit. Associates with free 30S ribosomal subunits (but not with 30S subunits that are part of 70S ribosomes or polysomes). Required for efficient processing of 16S rRNA. May interact with the 5'-terminal helix region of 16S rRNA. The sequence is that of Ribosome-binding factor A from Aeromonas hydrophila subsp. hydrophila (strain ATCC 7966 / DSM 30187 / BCRC 13018 / CCUG 14551 / JCM 1027 / KCTC 2358 / NCIMB 9240 / NCTC 8049).